The following is a 286-amino-acid chain: Release factor glutamine methyltransferase (286 aa).

S-adenosyl-L-methionine is bound by residues D136 and N179. Substrate is bound at residue N179–Y182.

The protein belongs to the protein N5-glutamine methyltransferase family. PrmC subfamily.

The catalysed reaction is L-glutaminyl-[peptide chain release factor] + S-adenosyl-L-methionine = N(5)-methyl-L-glutaminyl-[peptide chain release factor] + S-adenosyl-L-homocysteine + H(+). Methylates the class 1 translation termination release factors RF1/PrfA and RF2/PrfB on the glutamine residue of the universally conserved GGQ motif. This chain is Release factor glutamine methyltransferase, found in Borreliella burgdorferi (strain ATCC 35210 / DSM 4680 / CIP 102532 / B31) (Borrelia burgdorferi).